The sequence spans 378 residues: Spermidine/putrescine import ATP-binding protein PotA (378 aa).

In terms of domain architecture, ABC transporter spans Val-18–Ile-248. Residue Gly-50–Thr-57 participates in ATP binding.

Belongs to the ABC transporter superfamily. Spermidine/putrescine importer (TC 3.A.1.11.1) family. In terms of assembly, the complex is composed of two ATP-binding proteins (PotA), two transmembrane proteins (PotB and PotC) and a solute-binding protein (PotD).

It localises to the cell inner membrane. It catalyses the reaction ATP + H2O + polyamine-[polyamine-binding protein]Side 1 = ADP + phosphate + polyamineSide 2 + [polyamine-binding protein]Side 1.. Functionally, part of the ABC transporter complex PotABCD involved in spermidine/putrescine import. Responsible for energy coupling to the transport system. The chain is Spermidine/putrescine import ATP-binding protein PotA from Shigella flexneri serotype 5b (strain 8401).